Consider the following 447-residue polypeptide: tRNA-2-methylthio-N(6)-dimethylallyladenosine synthase (447 aa).

The MTTase N-terminal domain maps to 4 to 120; it reads RSFFIKTYGC…INELLERSRT (117 aa). [4Fe-4S] cluster contacts are provided by cysteine 13, cysteine 49, cysteine 83, cysteine 161, cysteine 165, and cysteine 168. Positions 147 to 382 constitute a Radical SAM core domain; sequence HEGEFRKFVT…QARQDEIGLE (236 aa). The 62-residue stretch at 385–446 folds into the TRAM domain; that stretch reads QEYIGTTQEV…QHSLRGSIVE (62 aa).

This sequence belongs to the methylthiotransferase family. MiaB subfamily. Monomer. [4Fe-4S] cluster serves as cofactor.

The protein localises to the cytoplasm. It catalyses the reaction N(6)-dimethylallyladenosine(37) in tRNA + (sulfur carrier)-SH + AH2 + 2 S-adenosyl-L-methionine = 2-methylsulfanyl-N(6)-dimethylallyladenosine(37) in tRNA + (sulfur carrier)-H + 5'-deoxyadenosine + L-methionine + A + S-adenosyl-L-homocysteine + 2 H(+). Catalyzes the methylthiolation of N6-(dimethylallyl)adenosine (i(6)A), leading to the formation of 2-methylthio-N6-(dimethylallyl)adenosine (ms(2)i(6)A) at position 37 in tRNAs that read codons beginning with uridine. In Desulfotalea psychrophila (strain LSv54 / DSM 12343), this protein is tRNA-2-methylthio-N(6)-dimethylallyladenosine synthase.